The chain runs to 979 residues: Pheromone-regulated membrane protein 10 (979 aa).

Disordered regions lie at residues 1-279 (MGKS…FFSK), 295-318 (LRNVNLHPEADPEKNSVQEAEVDG), 337-411 (YSSL…PQRV), 432-451 (FSTASSIGEEPAKPSKPLLD), and 491-528 (ATKHYPGRKNEEASGSNSELPSFKNTRPKKNKKHLPKF). Residues 15–26 (GGKDARSPETRS) show a composition bias toward basic and acidic residues. Over residues 29–38 (SRSSTDNRSS) the composition is skewed to low complexity. The segment covering 54–68 (LDLEEGVDDDADFDW) has biased composition (acidic residues). The segment covering 77 to 86 (DAQSLDNPFN) has biased composition (polar residues). Residues 105–115 (AIERDAVDTIR) are compositionally biased toward basic and acidic residues. Residues 122-135 (EEPDSASDGEDVGM) show a composition bias toward acidic residues. Basic and acidic residues-rich tracts occupy residues 138–148 (EYQRKRERLVD) and 158–175 (SPRRESREGKNVRFHTET). The segment covering 192 to 213 (EAGTGTNENGEASSSGMKSSIN) has biased composition (polar residues). Residues 253–263 (GAEKGMKSMKD) are compositionally biased toward basic and acidic residues. Residues 360 to 372 (SPSTPSSSPGPES) are compositionally biased toward low complexity. Over residues 379–395 (DDYDFDQVDSDGEDSDL) the composition is skewed to acidic residues. Polar residues predominate over residues 503–515 (ASGSNSELPSFKN). Residues 516–528 (TRPKKNKKHLPKF) are compositionally biased toward basic residues. 10 helical membrane passes run 658 to 678 (WVCVLLYGFCSAMVTPYAFGG), 680 to 700 (WVNLAVSFFIGTCVGALQFIV), 710 to 730 (VFEISASIVVSFVGRAFGSIG), 734 to 754 (ICFGAVTQGSLALILPGYIIL), 773 to 793 (FYAIIYSLFLSFGITLGAALF), 809 to 829 (PISPWYRFLFVPAFTIGISLI), 832 to 852 (AHWIQLPVMVTISCTGYVVTY), 864 to 884 (FTASLAAFVIGIMGNLYSRVW), 886 to 906 (GLAVSAMLPAIFVQVPSGVAS), and 946 to 966 (ITMIQVSIGITVGLFGSSLIV).

The protein belongs to the ThrE exporter (TC 2.A.79) family.

It is found in the membrane. In Zygosaccharomyces rouxii (strain ATCC 2623 / CBS 732 / NBRC 1130 / NCYC 568 / NRRL Y-229), this protein is Pheromone-regulated membrane protein 10.